The following is a 154-amino-acid chain: Endoribonuclease YbeY (154 aa).

Zn(2+)-binding residues include histidine 113, histidine 117, and histidine 123.

Belongs to the endoribonuclease YbeY family. Requires Zn(2+) as cofactor.

The protein localises to the cytoplasm. Single strand-specific metallo-endoribonuclease involved in late-stage 70S ribosome quality control and in maturation of the 3' terminus of the 16S rRNA. The chain is Endoribonuclease YbeY from Vibrio vulnificus (strain CMCP6).